The following is an 896-amino-acid chain: MRRGLVKDPDNADLFCKEDPERIFVDLHEIGHGSFGAVYFATNSTTNEIVAVKKMSYSGKQMNEKWQDIIKEVKFLQQLKHPNTIEYKGCYLKDHTAWLVMEYCLGSASDLLEVHKKPLQEVEIAAITHGALQGLAYLHSHNMIHRDIKAGNILLTEPGQVKLADFGSASKSSPANSFVGTPYWMAPEVILAMDEGQYDGKIDIWSLGITCIELAERKPPLFNMNAMSALYHIAQNESPTLQSNEWTDSFKGFVDYCLQKLPQERPASLELLRHDFVWRERPARVLIDLIQRTKDAVRELDNLQYRKMKKILFQESRNGPLNESQEDDEDSEHGTSLTRKMDSLGSNHSIPSTSVSTGSQSSSVNSIQEVMEDGSPDLIMSFSCSFDSTSSLVHKKDHAFIRDEADHRDPRPELRPTQSVQSQALHYRTRERFATIKSASLVTRQIHEHEQENELREQMSGYKRMRRQHQKQLIALENKLKAEMDEHRLKLQKEVETHANNASIELEKLSKRQFVGMDKEAKVAAADERRFQQQIIAQQKKDLTSFLESQKKQYKICKEKIKEELNEDHSTPKKEKQERISKHKENLQHTQAEEEAQLLSQQRLYYEKNCRLFKRKIMIKRHEVEQQHIREELNKKRTQKEMEHAMLIRQDESTRELEYRQLQMLQKLRMDLIRLQHQTELENQLEYNKRRERELHRKHVMELRQQPKNLKVMEMQIKKQFQDTCKVQTKQYKALKNHQLEVSPKCEHKTILKSLKDEQTRKLAILAEQYEQSINEMMASQALRLDEAQEAECQALRQQLQQEMELLNAYQSKIKMQTEAQHERELQKLEQRVSLRRAHLEQKIEEELVALQKERSERIKHLFERQEREIETFDMESLRMGFGNLVTLEYPKEDYR.

Positions 24–277 constitute a Protein kinase domain; the sequence is FVDLHEIGHG…SLELLRHDFV (254 aa). Residues 30–38 and Lys53 each bind ATP; that span reads IGHGSFGAV. The Proton acceptor role is filled by Asp147. Disordered stretches follow at residues 316 to 366 and 403 to 423; these read SRNG…SVNS and DEAD…VQSQ. Polar residues predominate over residues 334 to 348; sequence GTSLTRKMDSLGSNH. Positions 349–366 are enriched in low complexity; the sequence is SIPSTSVSTGSQSSSVNS. The segment covering 403 to 414 has biased composition (basic and acidic residues); that stretch reads DEADHRDPRPEL. 3 coiled-coil regions span residues 450–513, 545–650, and 752–873; these read EQEN…SKRQ, SFLE…LIRQ, and LKSL…IETF. Residues 565-587 are compositionally biased toward basic and acidic residues; that stretch reads LNEDHSTPKKEKQERISKHKENL. The interval 565-593 is disordered; that stretch reads LNEDHSTPKKEKQERISKHKENLQHTQAE.

Belongs to the protein kinase superfamily. STE Ser/Thr protein kinase family. STE20 subfamily.

The protein resides in the cytoplasm. Its subcellular location is the cell membrane. It localises to the membrane raft. It is found in the lipid droplet. The catalysed reaction is L-seryl-[protein] + ATP = O-phospho-L-seryl-[protein] + ADP + H(+). It carries out the reaction L-threonyl-[protein] + ATP = O-phospho-L-threonyl-[protein] + ADP + H(+). Serine/threonine-protein kinase that acts as a regulator of the p38/MAPK14 stress-activated MAPK cascade and of the MAPK8/JNK cascade. In response to DNA damage, involved in the G2/M transition DNA damage checkpoint by activating the p38/MAPK14 stress-activated MAPK cascade, probably by mediating phosphorylation of upstream MAP kinase kinases. Inhibits basal activity of the MAPK8/JNK cascade. This is Serine/threonine-protein kinase TAO3 (taok3) from Xenopus laevis (African clawed frog).